The chain runs to 136 residues: Protein NrdI (136 aa).

It belongs to the NrdI family.

Its function is as follows. Probably involved in ribonucleotide reductase function. The protein is Protein NrdI of Klebsiella pneumoniae subsp. pneumoniae (strain ATCC 700721 / MGH 78578).